Reading from the N-terminus, the 212-residue chain is Large ribosomal subunit protein uL1 (212 aa).

It belongs to the universal ribosomal protein uL1 family. As to quaternary structure, part of the 50S ribosomal subunit.

Binds directly to 23S rRNA. Probably involved in E site tRNA release. Functionally, protein L1 is also a translational repressor protein, it controls the translation of its operon by binding to its mRNA. The polypeptide is Large ribosomal subunit protein uL1 (Methanobrevibacter smithii (strain ATCC 35061 / DSM 861 / OCM 144 / PS)).